A 624-amino-acid chain; its full sequence is Elongation factor 4 (624 aa).

The region spanning 17-203 (ALIRNFCIIA…RVVRDVPAPV (187 aa)) is the tr-type G domain. Residues 29-34 (DHGKST) and 150-153 (NKID) contribute to the GTP site.

Belongs to the TRAFAC class translation factor GTPase superfamily. Classic translation factor GTPase family. LepA subfamily.

The protein resides in the cell membrane. The enzyme catalyses GTP + H2O = GDP + phosphate + H(+). Required for accurate and efficient protein synthesis under certain stress conditions. May act as a fidelity factor of the translation reaction, by catalyzing a one-codon backward translocation of tRNAs on improperly translocated ribosomes. Back-translocation proceeds from a post-translocation (POST) complex to a pre-translocation (PRE) complex, thus giving elongation factor G a second chance to translocate the tRNAs correctly. Binds to ribosomes in a GTP-dependent manner. This chain is Elongation factor 4, found in Streptomyces griseus subsp. griseus (strain JCM 4626 / CBS 651.72 / NBRC 13350 / KCC S-0626 / ISP 5235).